A 164-amino-acid polypeptide reads, in one-letter code: Probable calcium-binding protein CML17 (164 aa).

EF-hand domains are found at residues 4–39, 40–75, 88–123, and 126–161; these read DQQA…LGMP, VHRE…VMRV, VDEA…LGIK, and RTAE…GAFA. Residues aspartate 17, aspartate 19, aspartate 21, arginine 23, glutamate 28, aspartate 53, asparagine 55, aspartate 57, cysteine 59, glutamate 64, aspartate 101, asparagine 103, aspartate 105, glutamate 112, aspartate 139, aspartate 141, aspartate 143, arginine 145, and glutamate 150 each coordinate Ca(2+).

Potential calcium sensor. The polypeptide is Probable calcium-binding protein CML17 (CML17) (Oryza sativa subsp. japonica (Rice)).